Consider the following 167-residue polypeptide: uncharacterized protein (167 aa).

A run of 2 helical transmembrane segments spans residues 96–115 (YVPA…FNFY) and 119–138 (WGAL…IIAV).

It is found in the cell membrane. This is an uncharacterized protein from Bacillus subtilis (strain 168).